Reading from the N-terminus, the 421-residue chain is UPF0229 protein lpl2726 (421 aa).

A disordered region spans residues 83–110 (IAGDRIKRPGGGGSGGAGGNASDSGEGE). Residues 91-101 (PGGGGSGGAGG) are compositionally biased toward gly residues.

It belongs to the UPF0229 family.

This chain is UPF0229 protein lpl2726, found in Legionella pneumophila (strain Lens).